The primary structure comprises 306 residues: Protein-methionine-sulfoxide reductase catalytic subunit MsrP (306 aa).

A signal peptide (tat-type signal) is located at residues 1–45 (MLIRHAPDLTDNDVTDHSLYLKRRTLMAGVAGLGVAGASASHAQA). Mo-molybdopterin contacts are provided by residues asparagine 69, 72 to 73 (YE), cysteine 127, threonine 162, asparagine 210, arginine 215, and 226 to 228 (GIK).

Belongs to the MsrP family. Heterodimer of a catalytic subunit (MsrP) and a heme-binding subunit (MsrQ). It depends on Mo-molybdopterin as a cofactor. In terms of processing, predicted to be exported by the Tat system. The position of the signal peptide cleavage has not been experimentally proven.

The protein localises to the periplasm. It carries out the reaction L-methionyl-[protein] + a quinone + H2O = L-methionyl-(S)-S-oxide-[protein] + a quinol. It catalyses the reaction L-methionyl-[protein] + a quinone + H2O = L-methionyl-(R)-S-oxide-[protein] + a quinol. Its function is as follows. Part of the MsrPQ system that repairs oxidized periplasmic proteins containing methionine sulfoxide residues (Met-O), using respiratory chain electrons. Thus protects these proteins from oxidative-stress damage caused by reactive species of oxygen and chlorine generated by the host defense mechanisms. MsrPQ is essential for the maintenance of envelope integrity under bleach stress, rescuing a wide series of structurally unrelated periplasmic proteins from methionine oxidation. The catalytic subunit MsrP is non-stereospecific, being able to reduce both (R-) and (S-) diastereoisomers of methionine sulfoxide. The chain is Protein-methionine-sulfoxide reductase catalytic subunit MsrP from Caulobacter vibrioides (strain ATCC 19089 / CIP 103742 / CB 15) (Caulobacter crescentus).